The chain runs to 283 residues: Myeloid differentiation primary response protein MyD88-A (283 aa).

The Death domain maps to 27–105 (RLCLYLNPDA…DILTDLGPLI (79 aa)). Residues 106-143 (EADCMKYLEKKHVPLPIQDDKVDSSEQYRITKSDDPYG) form an intermediate domain region. Residues 147–281 (ETFDAFICYC…WFWDKLAKAL (135 aa)) enclose the TIR domain.

It localises to the cytoplasm. Adapter protein involved in the Toll-like receptor and IL-1 receptor signaling pathway in the innate immune response. Activates expression of target genes in the Spemann organizer region during early embryonic development. Is required for normal axis formation. The polypeptide is Myeloid differentiation primary response protein MyD88-A (myd88-a) (Xenopus laevis (African clawed frog)).